We begin with the raw amino-acid sequence, 570 residues long: MMQKLIAQIEKGKPFFEKLSRNIYLRAIRDGFISAMPVILFSSIFLLIAYVPNIFGFKWDKGMEAILMKPYNYTMGLVAFLVAGTTAKSLTDSFNRKLESTNQINFISTMLAAMCGFLFLASDPAKDGGFLSAFMGTKGLLTAFLSAFVTVIVYNFCVKRNITIKMPKEVPPNISQVFKDLIPFSAVIIILYALDLVIRNSFKSNVAEGILKLFEPLFTAADGWIGVTIIFGAFALFWFVGIHGPSIVEPAIAAITYANIEANFKLLQAGEHADKIITSGTQMFIVTFGGTGATLVVPFMFMWMTKSKRNKAIGRASVVPTFFGVNEPILFGAPLVLNPVFFIPFVLAPIVNVWIFKLFVEVLGMNSFSVNLPWTTPGPLGIIMGTGFGLWSFVLAITLIVVDIIIYYPFLKVYDSEILDEEEGRKESNSDLKEKVAANFDTKKADSILAASGVSDDAAKASNITEQTNVLVLCAGGGTSGLLANALNKAAEEYHVPVKAAAGGYGAHMDIMKEYQLIILAPQVASNYEDIKQDTDRLGIKLAKTQGAEYIKLTRDGQAALDFVQQQFEN.

In terms of domain architecture, PTS EIIC type-3 spans 9 to 410 (IEKGKPFFEK…VVDIIIYYPF (402 aa)). The next 9 membrane-spanning stretches (helical) occupy residues 31 to 51 (GFIS…IAYV), 65 to 85 (AILM…VAGT), 104 to 124 (INFI…ASDP), 133 to 153 (AFMG…TVIV), 178 to 198 (FKDL…DLVI), 223 to 243 (GWIG…VGIH), 283 to 303 (MFIV…MFMW), 340 to 360 (VFFI…KLFV), and 382 to 402 (IIMG…LIVV). The PTS EIIB type-3 domain occupies 467–570 (QTNVLVLCAG…LDFVQQQFEN (104 aa)). The active-site Phosphocysteine intermediate; for EIIB activity is Cys474. Cys474 is subject to Phosphocysteine; by EIIA.

The protein resides in the cell membrane. It carries out the reaction lactose(out) + N(pros)-phospho-L-histidyl-[protein] = lactose 6-phosphate(in) + L-histidyl-[protein]. The phosphoenolpyruvate-dependent sugar phosphotransferase system (sugar PTS), a major carbohydrate active transport system, catalyzes the phosphorylation of incoming sugar substrates concomitantly with their translocation across the cell membrane. The enzyme II LacEF PTS system is involved in lactose transport. The chain is PTS system lactose-specific EIICB component from Staphylococcus aureus (strain MSSA476).